The primary structure comprises 269 residues: Formamidopyrimidine-DNA glycosylase (269 aa).

Catalysis depends on Pro2, which acts as the Schiff-base intermediate with DNA. The Proton donor role is filled by Glu3. Residue Lys57 is the Proton donor; for beta-elimination activity of the active site. Positions 90, 109, and 150 each coordinate DNA. Residues 235–269 form an FPG-type zinc finger; the sequence is QVYGRKGEPCRVCGTPIVATKHAQRATFYCRHCQK. The active-site Proton donor; for delta-elimination activity is the Arg259.

This sequence belongs to the FPG family. Monomer. It depends on Zn(2+) as a cofactor.

It catalyses the reaction Hydrolysis of DNA containing ring-opened 7-methylguanine residues, releasing 2,6-diamino-4-hydroxy-5-(N-methyl)formamidopyrimidine.. The catalysed reaction is 2'-deoxyribonucleotide-(2'-deoxyribose 5'-phosphate)-2'-deoxyribonucleotide-DNA = a 3'-end 2'-deoxyribonucleotide-(2,3-dehydro-2,3-deoxyribose 5'-phosphate)-DNA + a 5'-end 5'-phospho-2'-deoxyribonucleoside-DNA + H(+). In terms of biological role, involved in base excision repair of DNA damaged by oxidation or by mutagenic agents. Acts as a DNA glycosylase that recognizes and removes damaged bases. Has a preference for oxidized purines, such as 7,8-dihydro-8-oxoguanine (8-oxoG). Has AP (apurinic/apyrimidinic) lyase activity and introduces nicks in the DNA strand. Cleaves the DNA backbone by beta-delta elimination to generate a single-strand break at the site of the removed base with both 3'- and 5'-phosphates. The protein is Formamidopyrimidine-DNA glycosylase of Salmonella paratyphi C (strain RKS4594).